A 449-amino-acid chain; its full sequence is MTSFYSTSSCPLGCTMAPGARNVFVSPIDVGCQPVAEANAASMCLLANVAHANRVRVGSTPLGRPSLCLPPTSHTACPLPGTCHIPGNIGICGAYGKNTLNGHEKETMKFLNDRLANYLEKVRQLEQENAELETTLLERSKCHESTVCPDYQSYFRTIEELQQKILCSKAENARLIVQIDNAKLAADDFRIKLESERSLHQLVEADKCGTQKLLDDATLAKADLEAQQESLKEEQLSLKSNHEQEVKILRSQLGEKFRIELDIEPTIDLNRVLGEMRAQYEAMVETNHQDVEQWFQAQSEGISLQAMSCSEELQCCQSEILELRCTVNALEVERQAQHTLKDCLQNSLCEAEDRYGTELAQMQSLISNLEEQLSEIRADLERQNQEYQVLLDVKARLENEIATYRNLLESEDCKLPCNPCSTPASCTSCPSCGPVTGGSPSGHGASMGR.

The segment at 1-104 is head; that stretch reads MTSFYSTSSC…YGKNTLNGHE (104 aa). The region spanning 104–415 is the IF rod domain; the sequence is EKETMKFLND…NLLESEDCKL (312 aa). The interval 105-139 is coil 1A; it reads KETMKFLNDRLANYLEKVRQLEQENAELETTLLER. Residues 140-150 are linker 1; that stretch reads SKCHESTVCPD. Residues 151–251 are coil 1B; the sequence is YQSYFRTIEE…HEQEVKILRS (101 aa). Residues 252–267 are linker 12; the sequence is QLGEKFRIELDIEPTI. Residues 268–411 are coil 2; the sequence is DLNRVLGEMR…ATYRNLLESE (144 aa). The tract at residues 416-449 is tail; sequence PCNPCSTPASCTSCPSCGPVTGGSPSGHGASMGR.

Belongs to the intermediate filament family.

The sequence is that of Keratin, type I cuticular Ha7 (KRT37) from Homo sapiens (Human).